Reading from the N-terminus, the 238-residue chain is Small ribosomal subunit protein uS2 (238 aa).

Belongs to the universal ribosomal protein uS2 family.

This is Small ribosomal subunit protein uS2 from Actinobacillus pleuropneumoniae serotype 7 (strain AP76).